The following is a 195-amino-acid chain: Cysteine/O-acetylserine efflux protein (195 aa).

Over 1-7 (MTPTLLS) the chain is Periplasmic. The helical transmembrane segment at 8–28 (AFWTYTLITAMTPGPNNILAL) threads the bilayer. At 29-46 (SSATSHGFRQSTRVLAGM) the chain is on the cytoplasmic side. Residues 47 to 67 (SLGFLIVMLLCAGISFSLAVI) form a helical membrane-spanning segment. Over 68–69 (DP) the chain is Periplasmic. A helical transmembrane segment spans residues 70 to 90 (AAVHLLSWAGAAYIVWLAWKI). The Cytoplasmic portion of the chain corresponds to 91–104 (ATSPTKEDGLQTKP). The helical transmembrane segment at 105-125 (ISFWASFALQFVNVKIILYGV) threads the bilayer. At 126 to 141 (TALSTFVLPQTQALSW) the chain is on the periplasmic side. A helical transmembrane segment spans residues 142-162 (VVGVSVLLAMIGTFGNVCWAL). Topologically, residues 163–176 (AGHLFQRLFRQYGR) are cytoplasmic. Residues 177 to 194 (QLNIVLALLLVYCAVRIF) form a helical membrane-spanning segment. Residue tyrosine 195 is a topological domain, periplasmic.

Belongs to the Rht family.

The protein resides in the cell inner membrane. It carries out the reaction O-acetyl-L-serine(in) = O-acetyl-L-serine(out). The catalysed reaction is L-cysteine(in) = L-cysteine(out). Its function is as follows. Exporter of O-acetylserine (OAS) and cysteine. This is Cysteine/O-acetylserine efflux protein (eamB) from Escherichia coli O1:K1 / APEC.